The sequence spans 112 residues: Large ribosomal subunit protein P2 (112 aa).

The disordered stretch occupies residues 81 to 112; the sequence is VETAEAKKEDKKEEKKEEEEEEEDDLGFSLFG. Positions 84-95 are enriched in basic and acidic residues; the sequence is AEAKKEDKKEEK. A compositionally biased stretch (acidic residues) spans 96-106; the sequence is KEEEEEEEDDL.

The protein belongs to the eukaryotic ribosomal protein P1/P2 family. P1 and P2 exist as dimers at the large ribosomal subunit. Phosphorylated.

Its function is as follows. Plays an important role in the elongation step of protein synthesis. The chain is Large ribosomal subunit protein P2 (MAL3P3.19) from Plasmodium falciparum (isolate 3D7).